The following is a 383-amino-acid chain: Transcription factor Y1 (383 aa).

2 consecutive HTH myb-type domains span residues 9-61 (KVGL…INYL) and 62-116 (RADV…SRQI). DNA-binding regions (H-T-H motif) lie at residues 37–61 (WRSLPKNAGLLRCGKSCRLRWINYL) and 89–112 (WSLIASHFPGRTDNEIKNYWNSHL). Positions 136-250 (SKLHSAEKRR…DATGPWELDP (115 aa)) are disordered. 2 stretches are compositionally biased toward low complexity: residues 155-170 (KSSSANTTTNTTSSKT) and 191-207 (ASSPPTAATTTSAASSP).

It is found in the nucleus. The protein operates within pigment biosynthesis. Its function is as follows. Transcription factor involved in regulating the biosynthetic pathway of flavan-4-ol-derived red phlobaphene and red-brown 3-deoxyanthocyanidin (3-DA) pigments. Regulates transcription of chalcone synthase, chalcone isomerase, dihydroflavonol reductase and flavonoid 3'-hydroxylase genes required for the phlobaphene and 3-DA biosynthesis. Transcription of these genes is activated in mesocotyls in response to ingress of non-pathogenic fungus C.heterostrophus. Regulates the production of 3-DA phytoalexins (luteolinidin, 5-methoxyluteolinidin, apigeninidin and 7-methoxyapigeninidin) in mesocotyls in response to C.heterostrophus and corn leaf aphid (CLA) R.maidis. Involved in resistance against anthracnose leaf blight (ALB) caused by the pathogenic C.sublineolum fungus by inducing the production of 3-DA phytoalexins. Confers resistance, also by inducing the production of 3-DA phytoalexins, against CLA R.maidis, which is an insect and a pest. In Sorghum bicolor (Sorghum), this protein is Transcription factor Y1.